A 27-amino-acid polypeptide reads, in one-letter code: C-reactive protein P1 (27 aa).

The disordered stretch occupies residues 1–27 (IPQDLSGKMLTFPKEEDDDDVKLMTPK). The 22-residue stretch at 6–27 (SGKMLTFPKEEDDDDVKLMTPK) folds into the Pentraxin (PTX) domain.

The protein belongs to the pentraxin family. As to quaternary structure, homopentamer. Pentraxin (or pentaxin) have a discoid arrangement of 5 non-covalently bound subunits. Exists as a dimer under reducing conditions. The cofactor is Ca(2+). Glycosylated.

It is found in the secreted. In terms of biological role, displays several functions associated with host defense: it promotes agglutination, bacterial capsular swelling, phagocytosis, and complement fixation through its calcium-dependent binding to phosphorylcholine. In Gadus morhua (Atlantic cod), this protein is C-reactive protein P1.